Reading from the N-terminus, the 64-residue chain is Large ribosomal subunit protein bL33 (64 aa).

This sequence belongs to the bacterial ribosomal protein bL33 family.

The sequence is that of Large ribosomal subunit protein bL33 from Synechococcus sp. (strain WH7803).